A 488-amino-acid polypeptide reads, in one-letter code: MQTLNRRNFPGRQHPDRVIQFGEGNFLRAFVDWQLDLLNEHTDLDAGIVIVRPIDSDFPPALDTQDGLYTTIIRGLNEQGEAVREPRLIRSVNREINVYRQFDEYLALAHDPNIRFVFSNTTEAGISYHADDSLSDAPPVSFPAKLTRLLYERFCHFDGAADKGWVLLPCELIDYNGVALKELVLRYAAQWKLTPTFTAWLNDHNTFCSTLVDRIVTGYPRAEVEALQQEMGYQDTFWDTAEHFYLFVIQGPQWLAEELRLNKLDLNVRIVDDIKPYKERKVAILNGAHTALVPVAFLAGLDTVGESMDDALIGKFVEKTIAEEIVPVLDLPHDELTSFAQAVLSRFRNPFIQHQLLSISLNGMTKFRTRILPQLLTYRERHGELPARLTFALAALIAFYRGERSGEGDTLQTYPLQDDAHWLERYSTLWAGVKENTVSLAELVNVVLRDADHWEQDLTQVPGLAAQVTEQLQTIVERGMRAAVEGYC.

18 to 29 contacts NAD(+); the sequence is VIQFGEGNFLRA.

It belongs to the mannitol dehydrogenase family. UxaB subfamily.

It carries out the reaction D-altronate + NAD(+) = keto-D-tagaturonate + NADH + H(+). It participates in carbohydrate metabolism; pentose and glucuronate interconversion. This is Altronate oxidoreductase from Pectobacterium carotovorum subsp. carotovorum (strain PC1).